The primary structure comprises 378 residues: UDP-N-acetylglucosamine--N-acetylmuramyl-(pentapeptide) pyrophosphoryl-undecaprenol N-acetylglucosamine transferase (378 aa).

Residues 14–16 (TGG), N125, R165, S193, and Q293 contribute to the UDP-N-acetyl-alpha-D-glucosamine site.

Belongs to the glycosyltransferase 28 family. MurG subfamily.

The protein resides in the cell inner membrane. It catalyses the reaction di-trans,octa-cis-undecaprenyl diphospho-N-acetyl-alpha-D-muramoyl-L-alanyl-D-glutamyl-meso-2,6-diaminopimeloyl-D-alanyl-D-alanine + UDP-N-acetyl-alpha-D-glucosamine = di-trans,octa-cis-undecaprenyl diphospho-[N-acetyl-alpha-D-glucosaminyl-(1-&gt;4)]-N-acetyl-alpha-D-muramoyl-L-alanyl-D-glutamyl-meso-2,6-diaminopimeloyl-D-alanyl-D-alanine + UDP + H(+). It functions in the pathway cell wall biogenesis; peptidoglycan biosynthesis. Its function is as follows. Cell wall formation. Catalyzes the transfer of a GlcNAc subunit on undecaprenyl-pyrophosphoryl-MurNAc-pentapeptide (lipid intermediate I) to form undecaprenyl-pyrophosphoryl-MurNAc-(pentapeptide)GlcNAc (lipid intermediate II). The protein is UDP-N-acetylglucosamine--N-acetylmuramyl-(pentapeptide) pyrophosphoryl-undecaprenol N-acetylglucosamine transferase of Bartonella tribocorum (strain CIP 105476 / IBS 506).